We begin with the raw amino-acid sequence, 355 residues long: Nematocyst expressed protein 3 (355 aa).

The first 18 residues, 1–18 (MKLTYILLIAVVGVAIEA), serve as a signal peptide directing secretion. ShKT domains are found at residues 50–89 (CKDVADDCKAFGKLEKDDENSCFNNPDKARNECPVSCKLC), 107–134 (QPQQCSQQSCYETPQWSVQNCAVTCQLC), and 140–182 (SGPV…CNTY). 6 disulfides stabilise this stretch: Cys-50–Cys-89, Cys-57–Cys-82, Cys-71–Cys-86, Cys-116–Cys-131, Cys-149–Cys-175, and Cys-158–Cys-179. A propeptide spanning residues 92-355 (KRSKKQSDYM…KKSKSHKKQH (264 aa)) is cleaved from the precursor. Residues 202–355 (YQPNAMPTPP…KKSKSHKKQH (154 aa)) are disordered. Over residues 207–221 (MPTPPQGVTPAPLPP) the composition is skewed to pro residues. Low complexity-rich tracts occupy residues 222 to 232 (YFQQQGYGYPQ), 240 to 270 (VQPGQTQAPTAAQSTPAPVQTTPASGKTTTE), and 277 to 332 (TEAA…AQSD). Positions 335 to 355 (NKKKHKKDKAQKKSKSHKKQH) are enriched in basic residues.

Belongs to the NEP3 family. As to expression, nematocytes. In late planulae, transcripts are found throughout the ectoderm in nematocytes, with high concentration of expressing cells in the oral pole. In primary polyps, is expressed in nematocytes in the body wall and physa ectoderm and in the upper and lower pharynx.

It localises to the nematocyst. Its subcellular location is the secreted. Functionally, neurotoxin. In vivo, induces pronounced contraction and tail twitching on zebrafish larvae, as well as death 5 hours later. The polypeptide is Nematocyst expressed protein 3 (Nematostella vectensis (Starlet sea anemone)).